A 337-amino-acid polypeptide reads, in one-letter code: Protein-methionine-sulfoxide reductase catalytic subunit MsrP (337 aa).

Residues 1–54 (MLIKLPRSSECKASEITPEGIYLSRRTLLGGSLAGLALGALPGGVGAAQMSRYA) constitute a signal peptide (tat-type signal). Residues N94, 97–98 (YE), C152, T187, N237, R242, and 253–255 (SIK) each bind Mo-molybdopterin.

Belongs to the MsrP family. Heterodimer of a catalytic subunit (MsrP) and a heme-binding subunit (MsrQ). Mo-molybdopterin serves as cofactor. Post-translationally, predicted to be exported by the Tat system. The position of the signal peptide cleavage has not been experimentally proven.

The protein localises to the periplasm. It catalyses the reaction L-methionyl-[protein] + a quinone + H2O = L-methionyl-(S)-S-oxide-[protein] + a quinol. It carries out the reaction L-methionyl-[protein] + a quinone + H2O = L-methionyl-(R)-S-oxide-[protein] + a quinol. In terms of biological role, part of the MsrPQ system that repairs oxidized periplasmic proteins containing methionine sulfoxide residues (Met-O), using respiratory chain electrons. Thus protects these proteins from oxidative-stress damage caused by reactive species of oxygen and chlorine generated by the host defense mechanisms. MsrPQ is essential for the maintenance of envelope integrity under bleach stress, rescuing a wide series of structurally unrelated periplasmic proteins from methionine oxidation. The catalytic subunit MsrP is non-stereospecific, being able to reduce both (R-) and (S-) diastereoisomers of methionine sulfoxide. This is Protein-methionine-sulfoxide reductase catalytic subunit MsrP from Pseudomonas putida (strain ATCC 47054 / DSM 6125 / CFBP 8728 / NCIMB 11950 / KT2440).